A 306-amino-acid chain; its full sequence is Type 3 secretion system translocon protein SctB (306 aa).

A helical membrane pass occupies residues 128-152; it reads LMIAMAVVSGIMAATSTVASAFSIA.

This sequence belongs to the SctB/YopD family. The core secretion machinery of the T3SS is composed of approximately 20 different proteins, including cytoplasmic components, a base, an export apparatus and a needle. This subunit is involved in the formation of a pore, called the translocon, in host membrane. Interacts with YopB/SctE and YopE. Together with YopB/SctE, forms a multimeric integral membrane complex with a mass of between 500 and 700 kDa. Interacts with its cognate chaperone SycD.

The protein localises to the secreted. Its subcellular location is the host membrane. Its function is as follows. Component of the type III secretion system (T3SS), also called injectisome, which is used to inject bacterial effector proteins into eukaryotic host cells. YopB/SctE and YopD/SctB are inserted into the host membrane where they form a pore and allow the translocation of effector proteins into the cytosol of target cells. In terms of biological role, involved in pathogenesis. Essential for the establishment of Yersinia infections in a mouse model system, but not for the targeting of effector Yops. May modulate the host's immune response at a distance from the site of infection. The polypeptide is Type 3 secretion system translocon protein SctB (Yersinia enterocolitica).